A 396-amino-acid polypeptide reads, in one-letter code: Phosphoglycerate kinase (396 aa).

Substrate contacts are provided by residues 21–23 (DFN), arginine 36, 59–62 (HLGR), arginine 118, and arginine 151. ATP contacts are provided by residues lysine 201, glycine 292, glutamate 323, and 349–352 (GGDS).

The protein belongs to the phosphoglycerate kinase family. As to quaternary structure, monomer.

The protein resides in the cytoplasm. The catalysed reaction is (2R)-3-phosphoglycerate + ATP = (2R)-3-phospho-glyceroyl phosphate + ADP. It participates in carbohydrate degradation; glycolysis; pyruvate from D-glyceraldehyde 3-phosphate: step 2/5. This is Phosphoglycerate kinase from Leptospira biflexa serovar Patoc (strain Patoc 1 / Ames).